Consider the following 89-residue polypeptide: UPF0175 protein APE_0276a (89 aa).

It belongs to the UPF0175 family.

The sequence is that of UPF0175 protein APE_0276a from Aeropyrum pernix (strain ATCC 700893 / DSM 11879 / JCM 9820 / NBRC 100138 / K1).